The following is a 129-amino-acid chain: uncharacterized protein (129 aa).

This is an uncharacterized protein from Clostridium perfringens (strain 13 / Type A).